The chain runs to 85 residues: Large ribosomal subunit protein bL27 (85 aa).

A disordered region spans residues Met-1–Arg-20.

It belongs to the bacterial ribosomal protein bL27 family.

In Colwellia psychrerythraea (strain 34H / ATCC BAA-681) (Vibrio psychroerythus), this protein is Large ribosomal subunit protein bL27.